Consider the following 95-residue polypeptide: Aspartyl/glutamyl-tRNA(Asn/Gln) amidotransferase subunit C (95 aa).

It belongs to the GatC family. Heterotrimer of A, B and C subunits.

The catalysed reaction is L-glutamyl-tRNA(Gln) + L-glutamine + ATP + H2O = L-glutaminyl-tRNA(Gln) + L-glutamate + ADP + phosphate + H(+). It carries out the reaction L-aspartyl-tRNA(Asn) + L-glutamine + ATP + H2O = L-asparaginyl-tRNA(Asn) + L-glutamate + ADP + phosphate + 2 H(+). In terms of biological role, allows the formation of correctly charged Asn-tRNA(Asn) or Gln-tRNA(Gln) through the transamidation of misacylated Asp-tRNA(Asn) or Glu-tRNA(Gln) in organisms which lack either or both of asparaginyl-tRNA or glutaminyl-tRNA synthetases. The reaction takes place in the presence of glutamine and ATP through an activated phospho-Asp-tRNA(Asn) or phospho-Glu-tRNA(Gln). The polypeptide is Aspartyl/glutamyl-tRNA(Asn/Gln) amidotransferase subunit C (Rhizobium rhizogenes (strain K84 / ATCC BAA-868) (Agrobacterium radiobacter)).